A 398-amino-acid chain; its full sequence is MMKPEFSHFFGFCVYFLFLQVMASSEKLRVTTPTRHLLARVGGQAELSCQVIPPHSVMHMEVRWFRSGHSQPVYLYRGGHKMSEEAAPEYANRTEFVKEAIGEGKVSLRIYNINILDDGPYQCSFNDSGFIDVAIMNLNVTAVGLETEIHVQAPDADGVMVECNTGGWFPRPQMEWRDSKGATLPHSLKSYSQDEARFFHMKMTLLLTNMSHGSIICCISNPVTGEEKQTSIILANELFNQDYLWVGIFPFSVLSLILFGVLPFINSFFRSQGCASGCLSKCLPVVTSWPVQIVHFLVCSGVLFAVYLPHRYRVSLSDPQFPLYNNWITELLIVILFLTICFVLPITVLLLIKLSPTCLAKWEKNKDDIMDSQLGLGKAREASTLYEEQSRKSWEQEK.

The signal sequence occupies residues 1-25; sequence MMKPEFSHFFGFCVYFLFLQVMASS. In terms of domain architecture, Ig-like V-type spans 26–141; sequence EKLRVTTPTR…DVAIMNLNVT (116 aa). Over 26–244 the chain is Extracellular; that stretch reads EKLRVTTPTR…ANELFNQDYL (219 aa). C49 and C123 are disulfide-bonded. N-linked (GlcNAc...) asparagine glycosylation is found at N92 and N139. In terms of domain architecture, Ig-like C1-type spans 142–233; sequence AVGLETEIHV…TGEEKQTSII (92 aa). C163 and C217 are disulfide-bonded. Residues 245 to 265 traverse the membrane as a helical segment; the sequence is WVGIFPFSVLSLILFGVLPFI. The Cytoplasmic portion of the chain corresponds to 266–288; that stretch reads NSFFRSQGCASGCLSKCLPVVTS. The helical transmembrane segment at 289-309 threads the bilayer; sequence WPVQIVHFLVCSGVLFAVYLP. Residues 310-331 lie on the Extracellular side of the membrane; that stretch reads HRYRVSLSDPQFPLYNNWITEL. The chain crosses the membrane as a helical span at residues 332 to 352; the sequence is LIVILFLTICFVLPITVLLLI. At 353–398 the chain is on the cytoplasmic side; that stretch reads KLSPTCLAKWEKNKDDIMDSQLGLGKAREASTLYEEQSRKSWEQEK.

This sequence belongs to the SKINT family. Expressed in skin, thymus, testis and, to a lower extent, bladder, brain, heart, kidney, mammary gland, small intestine and uterus.

The protein localises to the membrane. Functionally, may act by engaging a cell surface molecule on immature T-cells in the embryonic thymus. This Mus musculus (Mouse) protein is Selection and upkeep of intraepithelial T-cells protein 8 (Skint8).